Consider the following 601-residue polypeptide: ATP-dependent lipid A-core flippase (601 aa).

Helical transmembrane passes span 33 to 53, 72 to 92, 158 to 178, 255 to 275, and 283 to 303; these read CVAVVAMIAYAAITPFFAKLI, VSLMLIGLSVLRGIAGFLSEY, VIGLMALMVYQNPVLSLVFLV, LGGGVIHLISVAGVAGILYVV, and TITPGSLMAFIAAMAMMLSPI. Residues 34–315 enclose the ABC transmembrane type-1 domain; that stretch reads VAVVAMIAYA…LSQVVSVMQR (282 aa). Residues 347-583 enclose the ABC transporter domain; that stretch reads IEYRHVSLVY…RGGYADLYAM (237 aa). 381–388 provides a ligand contact to ATP; it reads GQSGSGKT.

It belongs to the ABC transporter superfamily. Lipid exporter (TC 3.A.1.106) family. In terms of assembly, homodimer.

Its subcellular location is the cell inner membrane. It catalyses the reaction ATP + H2O + lipid A-core oligosaccharideSide 1 = ADP + phosphate + lipid A-core oligosaccharideSide 2.. Its function is as follows. Involved in lipopolysaccharide (LPS) biosynthesis. Translocates lipid A-core from the inner to the outer leaflet of the inner membrane. Transmembrane domains (TMD) form a pore in the inner membrane and the ATP-binding domain (NBD) is responsible for energy generation. The polypeptide is ATP-dependent lipid A-core flippase (Methylococcus capsulatus (strain ATCC 33009 / NCIMB 11132 / Bath)).